A 246-amino-acid chain; its full sequence is Small ribosomal subunit protein uS2 (246 aa).

It belongs to the universal ribosomal protein uS2 family.

This is Small ribosomal subunit protein uS2 from Chromohalobacter salexigens (strain ATCC BAA-138 / DSM 3043 / CIP 106854 / NCIMB 13768 / 1H11).